A 297-amino-acid polypeptide reads, in one-letter code: N-acetylmannosamine kinase (297 aa).

Residues 5–12 and 132–139 contribute to the ATP site; these read ALDIGGTK and GVGGGIIL. Positions 156, 166, 168, and 173 each coordinate Zn(2+).

It belongs to the ROK (NagC/XylR) family. NanK subfamily. As to quaternary structure, homodimer.

The catalysed reaction is an N-acyl-D-mannosamine + ATP = an N-acyl-D-mannosamine 6-phosphate + ADP + H(+). It participates in amino-sugar metabolism; N-acetylneuraminate degradation; D-fructose 6-phosphate from N-acetylneuraminate: step 2/5. Catalyzes the phosphorylation of N-acetylmannosamine (ManNAc) to ManNAc-6-P. In Pasteurella multocida (strain Pm70), this protein is N-acetylmannosamine kinase.